The following is a 235-amino-acid chain: Putative 4'-phosphopantetheinyl transferase HI_0152 (235 aa).

Residues Asp112, Glu114, and Glu155 each contribute to the Mg(2+) site.

This sequence belongs to the P-Pant transferase superfamily. Gsp/Sfp/HetI/AcpT family. Mg(2+) serves as cofactor.

May transfer the 4'-phosphopantetheine moiety from coenzyme A (CoA) to a serine residue of a carrier protein domain. The chain is Putative 4'-phosphopantetheinyl transferase HI_0152 from Haemophilus influenzae (strain ATCC 51907 / DSM 11121 / KW20 / Rd).